The sequence spans 305 residues: Homeobox protein NANOGP8 (305 aa).

The segment at 1 to 96 (MSVDPACPQS…KEDKVPVKKQ (96 aa)) is disordered. A compositionally biased stretch (polar residues) spans 65–82 (SPDSSTSPKGKQPTSAEN). A DNA-binding region (homeobox) is located at residues 95 to 154 (KQKTRTVFSSTQLCVLNDRFQRQKYLSLQQMQELSNILNLSYKQVKTWFQNQRMKSKRWQ). Repeat copies occupy residues 196–200 (WSNQT), 201–205 (WNNST), 206–210 (WSNQT), 216–220 (WSNHS), 221–225 (WNTQT), 226–230 (WCTQS), 231–235 (WNNQA), and 236–240 (WNSPF). An 8 X repeats starting with a Trp in each unit region spans residues 196–240 (WSNQTWNNSTWSNQTQNIQSWSNHSWNTQTWCTQSWNNQAWNSPF). Positions 196–240 (WSNQTWNNSTWSNQTQNIQSWSNHSWNTQTWCTQSWNNQAWNSPF) are sufficient for transactivation activity. The segment at 241-305 (YNCGEESLQS…YSMNMQPEDV (65 aa)) is sufficient for strong transactivation activity.

The protein belongs to the Nanog homeobox family.

The protein localises to the nucleus. May act as a transcription regulator. When overexpressed, promotes entry of cells into S phase and cell proliferation. This chain is Homeobox protein NANOGP8 (NANOGP8), found in Homo sapiens (Human).